Consider the following 419-residue polypeptide: UDP-N-acetylglucosamine 1-carboxyvinyltransferase 2 (419 aa).

Lys22 to Asn23 is a binding site for phosphoenolpyruvate. Arg92 is a UDP-N-acetyl-alpha-D-glucosamine binding site. Cys116 serves as the catalytic Proton donor. Cys116 carries the 2-(S-cysteinyl)pyruvic acid O-phosphothioketal modification. UDP-N-acetyl-alpha-D-glucosamine is bound by residues Arg121–Leu125, Asp306, and Ile328.

Belongs to the EPSP synthase family. MurA subfamily.

It is found in the cytoplasm. It carries out the reaction phosphoenolpyruvate + UDP-N-acetyl-alpha-D-glucosamine = UDP-N-acetyl-3-O-(1-carboxyvinyl)-alpha-D-glucosamine + phosphate. Its pathway is cell wall biogenesis; peptidoglycan biosynthesis. In terms of biological role, cell wall formation. Adds enolpyruvyl to UDP-N-acetylglucosamine. The chain is UDP-N-acetylglucosamine 1-carboxyvinyltransferase 2 from Streptococcus pneumoniae (strain ATCC BAA-255 / R6).